The chain runs to 464 residues: MSRLVIVSNRVPVPDKGGIAPAGGLAVALKVALEEQGGGIWMGWSGKSSGEDEPAPLAQLQQGNITYALTDLTDTDVEEYYHGFANRVLWPICHYRLDLAEYGRKEMAGYFRVNRFFAHRLAPLVKPDDVIWVHDYPLIPLAAELRQMGLENRIGFFLHIPWPPADVLFTMPVHEEIMRGLSHYDVVGFQTDHDLENFASCLRREGIGDALGGGRLSAYGRIFKGGVYAIGIETAAFAEFAKKASTNSTVKKARESIERRSLIIGVDRLDYSKGLTQRIEAFERFILANPAQRGRVTYLQITPKSRSEVPEYEAMQRTVAEQAGRVNGALGAVDWVPMRYINRSVGRRVLAGLYRLGKVGLVTPLRDGKNLVAKEYVAAQDPDDPGVLVLSRFAGAARELQGALLVNPYDIEGTANAMARSLSMPLEERQERWTTMMDQLLEHDVSRWCRDFLNDLTASSDRCG.

Arg-10 is a D-glucose 6-phosphate binding site. 23–24 contacts UDP-alpha-D-glucose; the sequence is GG. D-glucose 6-phosphate-binding residues include Tyr-81 and Asp-135. Residues Arg-268 and Lys-273 each coordinate UDP-alpha-D-glucose. Position 306 (Arg-306) interacts with D-glucose 6-phosphate. 371-375 contacts UDP-alpha-D-glucose; sequence LVAKE.

It belongs to the glycosyltransferase 20 family. Homotetramer.

The enzyme catalyses D-glucose 6-phosphate + UDP-alpha-D-glucose = alpha,alpha-trehalose 6-phosphate + UDP + H(+). It participates in glycan biosynthesis; trehalose biosynthesis. Probably involved in the osmoprotection via the biosynthesis of trehalose. Catalyzes the transfer of glucose from UDP-alpha-D-glucose (UDP-Glc) to D-glucose 6-phosphate (Glc-6-P) to form trehalose-6-phosphate. Acts with retention of the anomeric configuration of the UDP-sugar donor. The polypeptide is Trehalose-6-phosphate synthase (Sinorhizobium fredii (strain NBRC 101917 / NGR234)).